Here is a 268-residue protein sequence, read N- to C-terminus: Zinc transporter ZupT (268 aa).

A run of 5 helical transmembrane segments spans residues 6–26 (LAFL…LIAF), 37–57 (SFAL…DIFF), 70–90 (TQGY…IGFI), 125–145 (GLFT…ATFV), and 152–172 (SIGL…GIAV). 2 residues coordinate Fe(2+): Asn-136 and Glu-139. Glu-139 and His-164 together coordinate Zn(2+). Fe(2+) is bound by residues Asn-165, Glu-168, and Glu-197. Glu-168 serves as a coordination point for Zn(2+). Transmembrane regions (helical) follow at residues 201–221 (AIVA…GIIF) and 248–268 (MSMY…LLLA).

The protein belongs to the ZIP transporter (TC 2.A.5) family. ZupT subfamily.

The protein resides in the cell membrane. The enzyme catalyses Zn(2+)(in) = Zn(2+)(out). In terms of biological role, mediates zinc uptake. May also transport other divalent cations. The sequence is that of Zinc transporter ZupT from Oceanobacillus iheyensis (strain DSM 14371 / CIP 107618 / JCM 11309 / KCTC 3954 / HTE831).